A 366-amino-acid chain; its full sequence is GTP cyclohydrolase 1 type 2 homolog (366 aa).

Zn(2+) is bound by residues His-64, His-65, Asp-102, His-326, and Glu-329.

This sequence belongs to the GTP cyclohydrolase I type 2/NIF3 family. As to quaternary structure, homohexamer.

In Staphylococcus aureus (strain MSSA476), this protein is GTP cyclohydrolase 1 type 2 homolog.